We begin with the raw amino-acid sequence, 264 residues long: GATA transcription factor 2 (264 aa).

Over residues 29–42 (SSSGGSTAATSSSS) the composition is skewed to low complexity. Disordered stretches follow at residues 29 to 57 (SSSG…HHLP) and 96 to 192 (NPLG…TPQW). Positions 101-110 (TMTSVKTETS) are enriched in polar residues. The Nuclear localization signal signature appears at 114 to 121 (KPRSKRSR). Over residues 155–164 (SGGGGGGGGR) the composition is skewed to gly residues. The GATA-type zinc-finger motif lies at 175-229 (GGGMRRCTHCASEKTPQWRTGPLGPKTLCNACGVRFKSGRLVPEYRPASSPTFVL).

It belongs to the type IV zinc-finger family. Class A subfamily. In terms of tissue distribution, mostly expressed in roots. Also expressed in flowers and leaves, and to a lower extent in stems.

Its subcellular location is the nucleus. Functionally, transcriptional activator that specifically binds 5'-GATA-3' or 5'-GAT-3' motifs within gene promoters. May be involved in the regulation of some light-responsive genes. The sequence is that of GATA transcription factor 2 (GATA2) from Arabidopsis thaliana (Mouse-ear cress).